Consider the following 252-residue polypeptide: Ureidoacrylate amidohydrolase RutB (252 aa).

The segment covering 1 to 14 (MSTPARNTTLTSNT) has biased composition (polar residues). Residues 1–31 (MSTPARNTTLTSNTPAGAPRLPGAPAPQVLP) are disordered. Low complexity predominate over residues 15-27 (PAGAPRLPGAPAP). Catalysis depends on Asp50, which acts as the Proton acceptor. Lys159 is a catalytic residue. Cys192 serves as the catalytic Nucleophile.

This sequence belongs to the isochorismatase family. RutB subfamily.

The catalysed reaction is (Z)-3-ureidoacrylate + H2O + H(+) = (Z)-3-aminoacrylate + NH4(+) + CO2. The enzyme catalyses (Z)-3-ureidoacrylate + H2O = (Z)-3-aminoacrylate + carbamate + H(+). It carries out the reaction (Z)-2-methylureidoacrylate + H2O + H(+) = (Z)-2-methylaminoacrylate + NH4(+) + CO2. Functionally, hydrolyzes ureidoacrylate to form aminoacrylate and carbamate. The carbamate hydrolyzes spontaneously, thereby releasing one of the nitrogen atoms of the pyrimidine ring as ammonia and one of its carbon atoms as CO2. The sequence is that of Ureidoacrylate amidohydrolase RutB from Variovorax paradoxus (strain S110).